Reading from the N-terminus, the 302-residue chain is Rab effector Noc2 (302 aa).

Residues 41–158 (QRRSQCLSPG…KRSGAWFYKG (118 aa)) form the RabBD domain. An FYVE-type zinc finger spans residues 89 to 146 (GNGLSQCLLCGEVLGFLGSSSVFCKDCRKKVCTKCGIEASPGQKRPLWLCKICSEQRE). Cys95, Cys98, Cys112, Cys115, Cys120, Cys123, Cys138, and Cys141 together coordinate Zn(2+). The interval 174–302 (DPHFRPLPVE…KRHTWATPRY (129 aa)) is disordered. Residues 185-197 (TETQPPSAETSRV) show a composition bias toward polar residues. The residue at position 248 (Ser248) is a Phosphoserine. A compositionally biased stretch (low complexity) spans 258-269 (SHLSGSQSSLGS).

In terms of assembly, recruited to dense-core vesicles through specific interaction with RAB27A in endocrine cells. Interacts with RAB3A, RAB3B, RAB3C and RAB3D. Interacts with ZYX. Highly expressed in pancreatic islets. High to moderate expression in adrenal gland, pituitary gland and ovary.

The protein resides in the cytoplasm. The protein localises to the cytoplasmic vesicle. It localises to the secretory vesicle membrane. Its function is as follows. Rab GTPase effector involved in the late steps of regulated exocytosis, both in endocrine and exocrine cells. Regulates the exocytosis of dense-core vesicles in neuroendocrine cells through interaction with RAB27A. Acts as a potential RAB3B effector protein in epithelial cells. This chain is Rab effector Noc2 (Rph3al), found in Mus musculus (Mouse).